Reading from the N-terminus, the 584-residue chain is Long-chain-fatty-acid--AMP ligase FadD26 (584 aa).

This sequence belongs to the ATP-dependent AMP-binding enzyme family.

It catalyses the reaction holo-[(phenol)carboxyphthiodiolenone synthase] + a long-chain fatty acid + ATP = a long-chain fatty acyl-[(phenol)carboxyphthiodiolenone synthase] + AMP + diphosphate. The catalysed reaction is eicosanoate + holo-[(phenol)carboxyphthiodiolenone synthase] + ATP = icosanoyl-[(phenol)carboxyphthiodiolenone synthase] + AMP + diphosphate. The enzyme catalyses holo-[(phenol)carboxyphthiodiolenone synthase] + docosanoate + ATP = docosanoyl-[(phenol)carboxyphthiodiolenone synthase] + AMP + diphosphate. It functions in the pathway lipid metabolism; fatty acid biosynthesis. Its function is as follows. Catalyzes the activation of long-chain fatty acids as acyl-adenylates (acyl-AMP), which are then transferred to the multifunctional polyketide synthase PpsA for further chain extension. Catalyzes the adenylation of the long-chain fatty acids eicosanoate (C20) or docosanoate (C22), and potentially the very-long-chain fatty acid lignocerate (C24). Involved in the biosynthesis of phthiocerol dimycocerosate (DIM A) and phthiodiolone dimycocerosate (DIM B). The chain is Long-chain-fatty-acid--AMP ligase FadD26 from Mycobacterium marinum (strain ATCC BAA-535 / M).